A 288-amino-acid chain; its full sequence is Alpha/beta hydrolase domain-containing protein 17B (288 aa).

Active-site charge relay system residues include Ser-170, Asp-235, and His-264. A Phosphoserine modification is found at Ser-282.

It belongs to the AB hydrolase superfamily. ABHD17 family. Palmitoylated on cysteine residues located in a cysteine cluster at the N-terminus which promotes membrane localization. Palmitoylation is required for post-synaptic localization and for depalmitoylating activity towards DLG4/PSD95. In terms of tissue distribution, expressed in brain.

The protein resides in the cell membrane. Its subcellular location is the recycling endosome membrane. It is found in the cell projection. The protein localises to the dendritic spine. It localises to the postsynaptic density membrane. It catalyses the reaction S-hexadecanoyl-L-cysteinyl-[protein] + H2O = L-cysteinyl-[protein] + hexadecanoate + H(+). Hydrolyzes fatty acids from S-acylated cysteine residues in proteins. Has depalmitoylating activity towards DLG4/PSD95. Has depalmitoylating activity towards GAP43. Has depalmitoylating activity towards MAP6. Has depalmitoylating activity towards NRAS. The polypeptide is Alpha/beta hydrolase domain-containing protein 17B (Mus musculus (Mouse)).